Reading from the N-terminus, the 74-residue chain is Mitotic-spindle organizing protein 1 (74 aa).

It belongs to the MOZART1 family. As to quaternary structure, part of the gamma-tubulin complex.

It is found in the cytoplasm. The protein localises to the cytoskeleton. The protein resides in the microtubule organizing center. Its subcellular location is the spindle pole body. In terms of biological role, required for gamma-tubulin complex recruitment to the microtubule organizing center (MTOC). This is Mitotic-spindle organizing protein 1 from Emericella nidulans (strain FGSC A4 / ATCC 38163 / CBS 112.46 / NRRL 194 / M139) (Aspergillus nidulans).